The following is a 640-amino-acid chain: Large subunit GTPase 1 homolog (640 aa).

Positions 165–426 (WRQLWRVIER…LCDCPGLVMP (262 aa)) constitute a CP-type G domain. Position 213-216 (213-216 (NKAD)) interacts with GTP. Residues 251-341 (AEERGEDAMD…ESTATSSFYN (91 aa)) form a disordered region. Acidic residues-rich tracts occupy residues 253-270 (ERGE…TEEE), 290-304 (EKDE…EGED), and 320-331 (ESGDEDHAEENP). Positions 332–341 (ESTATSSFYN) are enriched in polar residues. Residues 375–382 (GYPNVGKS) and 419–422 (DCPG) each bind GTP. The segment at 602-640 (GPVEAGKANTEQQAGKPWKKHGNRNKKEKVRRLNKHLDA) is disordered. Basic residues predominate over residues 618–640 (PWKKHGNRNKKEKVRRLNKHLDA).

This sequence belongs to the TRAFAC class YlqF/YawG GTPase family. LSG1 subfamily.

The protein localises to the cytoplasm. The protein resides in the endoplasmic reticulum. Its subcellular location is the nucleus. It is found in the cajal body. The enzyme catalyses GTP + H2O = GDP + phosphate + H(+). In terms of biological role, functions as a GTPase. May act by mediating the release of NMD3 from the 60S ribosomal subunit after export into the cytoplasm during the 60S ribosomal subunit maturation. This Danio rerio (Zebrafish) protein is Large subunit GTPase 1 homolog.